A 190-amino-acid chain; its full sequence is MRGLRPALSTFIFLLLITGGVYPLLTTVLGQWWFPWQANGSLIREGDTVRGSALIGQNFTGNGYFHGRPSATAEMPYNPQASGGSNLAVSNPELDKLIAARVAALRAANPDASASIPVELVTASASGLDNNITPQAAAWQIPRIAKARNLSVEQLTQLIAKYSQQPLVKYIGQPVVNIVKLNLALDKLDE.

A helical transmembrane segment spans residues 10 to 30 (TFIFLLLITGGVYPLLTTVLG).

It belongs to the KdpC family. In terms of assembly, the system is composed of three essential subunits: KdpA, KdpB and KdpC.

It localises to the cell inner membrane. Part of the high-affinity ATP-driven potassium transport (or Kdp) system, which catalyzes the hydrolysis of ATP coupled with the electrogenic transport of potassium into the cytoplasm. This subunit acts as a catalytic chaperone that increases the ATP-binding affinity of the ATP-hydrolyzing subunit KdpB by the formation of a transient KdpB/KdpC/ATP ternary complex. The sequence is that of Potassium-transporting ATPase KdpC subunit from Escherichia coli (strain 55989 / EAEC).